The sequence spans 350 residues: Calcium uniporter protein, mitochondrial (350 aa).

Residues 1–49 (MAAAAGRSLLLLLCSRGGGGGAGGCGALTAGCFPGLGVSRHRPHQQHRT) constitute a mitochondrion transit peptide. The Mitochondrial matrix portion of the chain corresponds to 50 to 232 (AHQRPASWQS…ISRKAEKRTT (183 aa)). Residues Ser56 and Ser91 each carry the phosphoserine; by CaMK2 modification. Positions 74 to 164 (VTVVYQNGLP…LTYHVRPPKR (91 aa)) are N-terminal MCU domain. Cys96 carries the S-glutathionyl cysteine modification. Positions 191–220 (IEQHQLNKERELVERLEDLKQQLAPLEKVR) form a coiled coil. A helical transmembrane segment spans residues 233–256 (LVLWGGLAYMATQFGILARLTWWE). Residues 257–264 (YSWDIMEP) lie on the Mitochondrial intermembrane side of the membrane. Positions 259 to 267 (WDIMEPVTY) match the Selectivity filter motif. Glu263 provides a ligand contact to Ca(2+). The helical transmembrane segment at 265 to 282 (VTYFITYGSAMAMYAYFV) threads the bilayer. Residues 283-350 (MTRQEYVYPE…LPLRQIGEKE (68 aa)) lie on the Mitochondrial matrix side of the membrane. The tract at residues 284 to 289 (TRQEYV) is juxtamembrane helix. Residues 310–338 (RFDLEKYNQLKDAIAQAEMDLKRLRDPLQ) adopt a coiled-coil conformation. At Lys331 the chain carries N6-acetyllysine.

It belongs to the MCU (TC 1.A.77) family. As to quaternary structure, homotetramer. Component of the uniplex complex, composed of MCU, EMRE/SMDT1, MICU1 and MICU2 (or MICU3) in a 4:4:1:1 stoichiometry. Interacts with CCDC109B/MCUB; this inhibits channel activity. Interacts with MCUR1. Interactions with MICU1 and MCUR1 are mutually exclusive. Interacts with SLC25A23. In terms of processing, phosphorylation by CaMK2 in heart leads to increased MCU current. The regulation of MCU by CaMK2 is however subject to discussion: another group was unable to reproduce these results. Phosphorylated on tyrosines by PTK2B/PYK2, promoting oligomerization. Post-translationally, glutathionylation at Cys-96 in response to reactive oxygen species (ROS) promotes MCU higher-order assembly, leading to constitutive activation of the MCU channel and mitochondrial calcium overload. Undergoes proteolytic degradation by SPG7. In terms of tissue distribution, detected in heart muscle (at protein level). Expressed in skeletal muscle, heart, kidney, liver, brain, lung, white fat and spleen.

The protein localises to the mitochondrion inner membrane. The enzyme catalyses Ca(2+)(in) = Ca(2+)(out). With respect to regulation, MCU channel activity is regulated by the heterodimer composed of MICU1 and either MICU2 or MICU3, which act as calcium-sensors. At low calcium levels, MICU1 occludes the pore of the MCU channel, preventing mitochondrial calcium uptake. At higher calcium levels, calcium-binding to MICU1 and MICU2 (or MICU3) induces a conformational change that weakens MCU-MICU1 interactions and moves the MICU1-MICU2 heterodimer away from the pore, allowing calcium permeation through the channel. MCU channel activity is gated by EMRE/SMDT1 via the juxtamembrane helix loop. Inhibited by ruthenium red or its derivative Ru360. Channel-forming and calcium-conducting subunit of the mitochondrial inner membrane calcium uniporter complex (uniplex), which mediates calcium uptake into the mitochondrial matrix. MCU channel activity is regulated by the calcium-sensor subunits of the uniplex MICU1 and MICU2 (or MICU3). Mitochondrial calcium homeostasis plays key roles in cellular physiology and regulates ATP production, cytoplasmic calcium signals and activation of cell death pathways. Involved in buffering the amplitude of systolic calcium rises in cardiomyocytes. While dispensable for baseline homeostatic cardiac function, acts as a key regulator of short-term mitochondrial calcium loading underlying a 'fight-or-flight' response during acute stress: acts by mediating a rapid increase of mitochondrial calcium in pacemaker cells. Participates in mitochondrial permeability transition during ischemia-reperfusion injury. Mitochondrial calcium uptake in skeletal muscle cells is involved in muscle size in adults. Regulates synaptic vesicle endocytosis kinetics in central nerve terminal. Regulates glucose-dependent insulin secretion in pancreatic beta-cells by regulating mitochondrial calcium uptake. Involved in antigen processing and presentation. The protein is Calcium uniporter protein, mitochondrial of Mus musculus (Mouse).